We begin with the raw amino-acid sequence, 476 residues long: Glutamate--tRNA ligase (476 aa).

The 'HIGH' region motif lies at 9–19; sequence PSPTGTLHLGT. The short motif at 248-252 is the 'KMSKS' region element; it reads KLSKR. ATP is bound at residue lysine 251.

The protein belongs to the class-I aminoacyl-tRNA synthetase family. Glutamate--tRNA ligase type 1 subfamily. As to quaternary structure, monomer.

Its subcellular location is the cytoplasm. It catalyses the reaction tRNA(Glu) + L-glutamate + ATP = L-glutamyl-tRNA(Glu) + AMP + diphosphate. In terms of biological role, catalyzes the attachment of glutamate to tRNA(Glu) in a two-step reaction: glutamate is first activated by ATP to form Glu-AMP and then transferred to the acceptor end of tRNA(Glu). This is Glutamate--tRNA ligase from Prochlorococcus marinus (strain NATL2A).